A 125-amino-acid chain; its full sequence is Cu-Zn superoxide dismutase-like protein OPG175 (125 aa).

Residues Cys-52 and Cys-102 are joined by a disulfide bond.

It belongs to the Cu-Zn superoxide dismutase family.

The protein resides in the virion. It localises to the host cytoplasm. In terms of biological role, superoxide dismutase-like protein with no enzymatic activity. The polypeptide is Cu-Zn superoxide dismutase-like protein OPG175 (OPG175) (Cowpox virus (strain Brighton Red) (CPV)).